A 54-amino-acid polypeptide reads, in one-letter code: Califin-B (54 aa).

Cys-25 and Cys-53 are oxidised to a cystine. Residue Leu-36 is modified to Leucine amide.

It belongs to the molluscan ELH family. This protein consists of a large 36-residue subunit, bound by a single disulfide-bond to a small 18-residue subunit.

The protein resides in the secreted. Injected in sexually mature animals califin B excites LB and LC cells of the abdominal ganglion and cause egg-laying. This chain is Califin-B, found in Aplysia californica (California sea hare).